Here is a 76-residue protein sequence, read N- to C-terminus: High-potential iron-sulfur protein isozyme 2 (76 aa).

Cysteine 38, cysteine 41, cysteine 54, and cysteine 70 together coordinate [4Fe-4S] cluster.

It belongs to the high-potential iron-sulfur protein (HiPIP) family. In terms of assembly, homodimer.

Functionally, specific class of high-redox-potential 4Fe-4S ferredoxins. Functions in anaerobic electron transport in most purple and in some other photosynthetic bacteria and in at least one genus (Paracoccus) of halophilic, denitrifying bacteria. This Halorhodospira halophila (Ectothiorhodospira halophila) protein is High-potential iron-sulfur protein isozyme 2 (hip2).